Consider the following 564-residue polypeptide: Proline--tRNA ligase (564 aa).

It belongs to the class-II aminoacyl-tRNA synthetase family. ProS type 1 subfamily. As to quaternary structure, homodimer.

The protein resides in the cytoplasm. It carries out the reaction tRNA(Pro) + L-proline + ATP = L-prolyl-tRNA(Pro) + AMP + diphosphate. Functionally, catalyzes the attachment of proline to tRNA(Pro) in a two-step reaction: proline is first activated by ATP to form Pro-AMP and then transferred to the acceptor end of tRNA(Pro). As ProRS can inadvertently accommodate and process non-cognate amino acids such as alanine and cysteine, to avoid such errors it has two additional distinct editing activities against alanine. One activity is designated as 'pretransfer' editing and involves the tRNA(Pro)-independent hydrolysis of activated Ala-AMP. The other activity is designated 'posttransfer' editing and involves deacylation of mischarged Ala-tRNA(Pro). The misacylated Cys-tRNA(Pro) is not edited by ProRS. The chain is Proline--tRNA ligase from Coxiella burnetii (strain Dugway 5J108-111).